Here is a 420-residue protein sequence, read N- to C-terminus: O-methyltransferase penK (420 aa).

Asp285 serves as a coordination point for S-adenosyl-L-methionine. The active-site Proton acceptor is His325.

Belongs to the class I-like SAM-binding methyltransferase superfamily. Cation-independent O-methyltransferase family.

The protein operates within secondary metabolite biosynthesis. Its pathway is alkaloid biosynthesis. It participates in mycotoxin biosynthesis. In terms of biological role, O-methyltransferase; part of the gene cluster that mediates the biosynthesis of penigequinolones, potent insecticidal alkaloids that contain a highly modified 10-carbon prenyl group. The first stage is catalyzed by the nonribosomal peptide synthetase penN that condenses anthranilic acid and O-methyl-L-tyrosine to produce 4'-methoxycyclopeptin. 4'-methoxycyclopeptin is then converted to 4'-methoxydehydrocyclopeptin by the ketoglutarate-dependent dioxygenase penM through dehydrogenation to form a double bond between C-alpha and C-beta of the O-methyltyrosine side chain. PenM also converts its first product methoxydehydrocyclopeptin to 4'-methoxycyclopenin. The following conversion of 4'methoxycyclopenin into 4'-methoxyviridicatin is catalyzed by the cyclopenase penL. 4'-methoxyviridicatin is the precursor of quinolone natural products, and is further converted to quinolinone B. The prenyltransferase penI then catalyzes the canonical Friedel-Crafts alkylation of quinolinone B with dimethylallyl cation to yield dimethylallyl quinolone, which is subjected to FAD-dependent dehydrogenation by the FAD-linked oxidoreductase penH to yield conjugated aryl diene. The delta(3') double bond then serves as the site of the second alkylation with DMAPP catalyzed by the prenyltransferase penG to yield a carbenium ion intermediate, which can be attacked by H(2)O to yield a styrenyl quinolone containing a C3'-hydroxyprenyl chain, or undergo cyclization to yield yaequinolones J1 and J2. The conversion of the styrenyl quinolone into the tetrahydrofuran-containing yaequinolone C is performed by the FAD-dependent monooxygenase penE and involves epoxidation of the terminal C7'-C8' olefin, followed by epoxide ring opening initiated by the C3' hydroxyl group. The predicted cysteine hydrolase penJ acts as an epoxide hydrolase that enhances the rate of the 5-exo-tet cyclization step, increasing the yield of yaequinolone C. PenF catalyzes the cationic rearrangement of the epoxide formed by penE (before ring opening to produce yaequinolone C) into yaequinolone D. Finally, the short-chain dehydrogenase/reductase (SDR)-like reductase penD, catalyzes both the dehydration of yaequinolone D and the reduction of the resulting oxonium to yield penigequinolone. The chain is O-methyltransferase penK from Penicillium thymicola.